The sequence spans 716 residues: 1,4-alpha-glucan branching enzyme GlgB (716 aa).

Asp-399 acts as the Nucleophile in catalysis. The Proton donor role is filled by Glu-452.

The protein belongs to the glycosyl hydrolase 13 family. GlgB subfamily. In terms of assembly, monomer.

It carries out the reaction Transfers a segment of a (1-&gt;4)-alpha-D-glucan chain to a primary hydroxy group in a similar glucan chain.. It participates in glycan biosynthesis; glycogen biosynthesis. Functionally, catalyzes the formation of the alpha-1,6-glucosidic linkages in glycogen by scission of a 1,4-alpha-linked oligosaccharide from growing alpha-1,4-glucan chains and the subsequent attachment of the oligosaccharide to the alpha-1,6 position. The polypeptide is 1,4-alpha-glucan branching enzyme GlgB (Rhodopseudomonas palustris (strain HaA2)).